We begin with the raw amino-acid sequence, 240 residues long: uncharacterized protein (240 aa).

Residues 1 to 85 (MSGFIKSTLL…LCGCCCWTNT (85 aa)) lie on the Cytoplasmic side of the membrane. Residues 86 to 106 (IGWAPLLALLPVIGPLLMYWV) form a helical membrane-spanning segment. The Extracellular segment spans residues 107–131 (HDKLIELADDRYKLPAEIKVKMHGN). The chain crosses the membrane as a helical span at residues 132-152 (IVIDLLISLVPILGSVFAWLH). Topologically, residues 153–240 (ACSTRNAAIV…TNGRPQRGYR (88 aa)) are cytoplasmic. The interval 181–240 (QKEENEKHSNANTAPPVVGGNKNVNGNRNNSKMYNRPPVTAPPAPAYTRSTNGRPQRGYR) is disordered. The span at 197 to 210 (VVGGNKNVNGNRNN) shows a compositional bias: low complexity.

It is found in the membrane. This is an uncharacterized protein from Saccharomyces cerevisiae (strain ATCC 204508 / S288c) (Baker's yeast).